Reading from the N-terminus, the 149-residue chain is Large ribosomal subunit protein bL9 (149 aa).

It belongs to the bacterial ribosomal protein bL9 family.

Its function is as follows. Binds to the 23S rRNA. This Mycoplasma pneumoniae (strain ATCC 29342 / M129 / Subtype 1) (Mycoplasmoides pneumoniae) protein is Large ribosomal subunit protein bL9.